We begin with the raw amino-acid sequence, 503 residues long: 11-hydroxysugiol 20-monooxygenase (503 aa).

Residues 2 to 22 form a helical membrane-spanning segment; it reads QVLIVASLAFLAAWLVYSRWS. Residue cysteine 446 participates in heme binding.

This sequence belongs to the cytochrome P450 family. Heme is required as a cofactor. In terms of tissue distribution, highly expressed in roots.

It localises to the membrane. The catalysed reaction is 11-hydroxysugiol + reduced [NADPH--hemoprotein reductase] + O2 = 11,20-dihydroxysugiol + oxidized [NADPH--hemoprotein reductase] + H2O + H(+). It catalyses the reaction 11-hydroxyferruginol + reduced [NADPH--hemoprotein reductase] + O2 = 11,20-dihydroxyferruginol + oxidized [NADPH--hemoprotein reductase] + H2O + H(+). It participates in secondary metabolite biosynthesis; terpenoid biosynthesis. In terms of biological role, monooxygenase that oxidizes 11-hydroxysugiol to produce 11,20-dihydroxysugiol. Can oxidize 11-hydroxyferruginol to produce 11,20-dihydroxyferruginol. These products are intermediates in tanshinone biosynthesis. This Salvia miltiorrhiza (Chinese sage) protein is 11-hydroxysugiol 20-monooxygenase.